Here is a 38-residue protein sequence, read N- to C-terminus: Photosystem II reaction center protein L (38 aa).

The chain crosses the membrane as a helical span at residues 17–37 (SLFWGLLLIFVLAVLFSNYFF).

Belongs to the PsbL family. PSII is composed of 1 copy each of membrane proteins PsbA, PsbB, PsbC, PsbD, PsbE, PsbF, PsbH, PsbI, PsbJ, PsbK, PsbL, PsbM, PsbT, PsbX, PsbY, PsbZ, Psb30/Ycf12, at least 3 peripheral proteins of the oxygen-evolving complex and a large number of cofactors. It forms dimeric complexes.

The protein localises to the plastid. The protein resides in the chloroplast thylakoid membrane. One of the components of the core complex of photosystem II (PSII). PSII is a light-driven water:plastoquinone oxidoreductase that uses light energy to abstract electrons from H(2)O, generating O(2) and a proton gradient subsequently used for ATP formation. It consists of a core antenna complex that captures photons, and an electron transfer chain that converts photonic excitation into a charge separation. This subunit is found at the monomer-monomer interface and is required for correct PSII assembly and/or dimerization. This is Photosystem II reaction center protein L from Chaetosphaeridium globosum (Charophycean green alga).